The chain runs to 85 residues: MKLLLLLTISASMLIEGLVNADGYIRGGDGCKVSCVINHVFCDNECKAAGGSYGYCWAWGLACWCEGLPAEREWDYETDTCGGKK.

The N-terminal stretch at 1-21 (MKLLLLLTISASMLIEGLVNA) is a signal peptide. One can recognise an LCN-type CS-alpha/beta domain in the interval 22–82 (DGYIRGGDGC…EWDYETDTCG (61 aa)). 4 disulfides stabilise this stretch: C31-C81, C35-C56, C42-C63, and C46-C65. G82 is subject to Glycine amide.

Belongs to the long (4 C-C) scorpion toxin superfamily. Sodium channel inhibitor family. Beta subfamily. Expressed by the venom gland.

It localises to the secreted. Functionally, depressant insect beta-toxins cause a transient contraction paralysis followed by a slow flaccid paralysis. They bind voltage-independently at site-4 of sodium channels (Nav) and block action potentials, primarily by depolarizing the axonal membrane and suppressing the sodium current. This depressant toxin is active only on insects. It is found in a relatively small amount in the venom. The polypeptide is Beta-insect depressant toxin Lqh-dprIT3h (Leiurus hebraeus (Hebrew deathstalker scorpion)).